A 204-amino-acid chain; its full sequence is Large ribosomal subunit protein uL4 (204 aa).

Residues 49–75 (TKGRSDVSGGGKKPWRQKGRGGARAGS) are disordered.

This sequence belongs to the universal ribosomal protein uL4 family. Part of the 50S ribosomal subunit.

In terms of biological role, one of the primary rRNA binding proteins, this protein initially binds near the 5'-end of the 23S rRNA. It is important during the early stages of 50S assembly. It makes multiple contacts with different domains of the 23S rRNA in the assembled 50S subunit and ribosome. Functionally, forms part of the polypeptide exit tunnel. The chain is Large ribosomal subunit protein uL4 from Campylobacter lari (strain RM2100 / D67 / ATCC BAA-1060).